The chain runs to 481 residues: Aspartyl/glutamyl-tRNA(Asn/Gln) amidotransferase subunit B (481 aa).

This sequence belongs to the GatB/GatE family. GatB subfamily. As to quaternary structure, heterotrimer of A, B and C subunits.

The enzyme catalyses L-glutamyl-tRNA(Gln) + L-glutamine + ATP + H2O = L-glutaminyl-tRNA(Gln) + L-glutamate + ADP + phosphate + H(+). It carries out the reaction L-aspartyl-tRNA(Asn) + L-glutamine + ATP + H2O = L-asparaginyl-tRNA(Asn) + L-glutamate + ADP + phosphate + 2 H(+). Functionally, allows the formation of correctly charged Asn-tRNA(Asn) or Gln-tRNA(Gln) through the transamidation of misacylated Asp-tRNA(Asn) or Glu-tRNA(Gln) in organisms which lack either or both of asparaginyl-tRNA or glutaminyl-tRNA synthetases. The reaction takes place in the presence of glutamine and ATP through an activated phospho-Asp-tRNA(Asn) or phospho-Glu-tRNA(Gln). This Pseudomonas savastanoi pv. phaseolicola (strain 1448A / Race 6) (Pseudomonas syringae pv. phaseolicola (strain 1448A / Race 6)) protein is Aspartyl/glutamyl-tRNA(Asn/Gln) amidotransferase subunit B.